Reading from the N-terminus, the 177-residue chain is Probable inosine/xanthosine triphosphatase (177 aa).

Belongs to the YjjX NTPase family. As to quaternary structure, homodimer. The cofactor is Mg(2+). Mn(2+) serves as cofactor.

It catalyses the reaction XTP + H2O = XDP + phosphate + H(+). It carries out the reaction ITP + H2O = IDP + phosphate + H(+). Functionally, phosphatase that hydrolyzes non-canonical purine nucleotides such as XTP and ITP to their respective diphosphate derivatives. Probably excludes non-canonical purines from DNA/RNA precursor pool, thus preventing their incorporation into DNA/RNA and avoiding chromosomal lesions. The chain is Probable inosine/xanthosine triphosphatase from Pyrobaculum arsenaticum (strain DSM 13514 / JCM 11321 / PZ6).